Here is a 469-residue protein sequence, read N- to C-terminus: Mitochondrial adenyl nucleotide antiporter SLC25A25 (469 aa).

The interval 1–165 (MLCLCLYVPV…LYWKHSTIFD (165 aa)) is regulatory N-terminal domain. Residues 1-189 (MLCLCLYVPV…ERQTGMWWRH (189 aa)) lie on the Mitochondrial intermembrane side of the membrane. 3 EF-hand domains span residues 47-80 (TYRQ…QDHE), 78-113 (DHEK…LGVK), and 114-149 (ISEQ…HPVE). Ca(2+) contacts are provided by Asp60, Asp62, Asp64, Gln66, and Glu71. The interval 151–160 (IPEIILYWKH) is linker region. Positions 166–469 (VGENLTVPDE…LKITLGVQSR (304 aa)) are C-terminal transmembrane transporter domain. 3 Solcar repeats span residues 184 to 270 (GMWW…IKRL), 278 to 363 (LRIH…LKNA), and 375 to 463 (PGVF…LKIT). A helical membrane pass occupies residues 190 to 207 (LVAGGGAGAVSRTCTAPL). Residues 208–244 (DRLKVLMQVHASRSNNMGIVGGFTQMIREGGARSLWR) lie on the Mitochondrial matrix side of the membrane. The chain crosses the membrane as a helical span at residues 245 to 264 (GNGINVLKIAPESAIKFMAY). Over 265 to 287 (EQIKRLVGSDQETLRIHERLVAG) the chain is Mitochondrial intermembrane. Residues 288-301 (SLAGAIAQSSIYPM) traverse the membrane as a helical segment. Topologically, residues 302–337 (EVLKTRMALRKTGQYSGMLDCARRILAREGVAAFYK) are mitochondrial matrix. Residues 338-357 (GYVPNMLGIIPYAGIDLAVY) form a helical membrane-spanning segment. Residues 358 to 380 (ETLKNAWLQHYAVNSADPGVFVL) are Mitochondrial intermembrane-facing. A helical membrane pass occupies residues 381 to 398 (LACGTMSSTCGQLASYPL). Residues 399-437 (ALVRTRMQAQASIEGAPEVTMSSLFKHILRTEGAFGLYR) are Mitochondrial matrix-facing. A helical membrane pass occupies residues 438–457 (GLAPNFMKVIPAVSISYVVY). The Mitochondrial intermembrane segment spans residues 458 to 469 (ENLKITLGVQSR).

The protein belongs to the mitochondrial carrier (TC 2.A.29) family. In terms of tissue distribution, widely expressed. Expressed in fetal and adult liver, skeletal muscle, testis, ovary, hippocampus and caudate nucleus. As to expression, expressed in all tissues tested. Expression is restricted to kidney and lung.

Its subcellular location is the mitochondrion inner membrane. The enzyme catalyses Mg(2+)(out) + phosphate(in) + ATP(out) = Mg(2+)(in) + phosphate(out) + ATP(in). Its activity is regulated as follows. Activated by an increase in cytosolic calcium levels that induce a conformational change of the N-terminal regulatory domain, uncapping the channel and allowing transport. Electroneutral antiporter that most probably mediates the transport of adenyl nucleotides through the inner mitochondrial membrane. Originally identified as an ATP-magnesium/inorganic phosphate antiporter, it could have a broader specificity for adenyl nucleotides. By regulating the mitochondrial matrix adenyl nucleotide pool could adapt to changing cellular energetic demands and indirectly regulate adenyl nucleotide-dependent metabolic pathways. This chain is Mitochondrial adenyl nucleotide antiporter SLC25A25, found in Homo sapiens (Human).